The primary structure comprises 243 residues: Carboxy-S-adenosyl-L-methionine synthase (243 aa).

Residues Tyr40, 65–67, 90–91, 118–119, Asn133, and Arg200 each bind S-adenosyl-L-methionine; these read GCS, DN, and DI.

This sequence belongs to the class I-like SAM-binding methyltransferase superfamily. Cx-SAM synthase family. As to quaternary structure, homodimer.

The catalysed reaction is prephenate + S-adenosyl-L-methionine = carboxy-S-adenosyl-L-methionine + 3-phenylpyruvate + H2O. Functionally, catalyzes the conversion of S-adenosyl-L-methionine (SAM) to carboxy-S-adenosyl-L-methionine (Cx-SAM). The sequence is that of Carboxy-S-adenosyl-L-methionine synthase from Shewanella sediminis (strain HAW-EB3).